Reading from the N-terminus, the 508-residue chain is MLO-like protein 3 (508 aa).

Topologically, residues 1–21 (MTDKEESNHSSEVGAVRSLQE) are extracellular. A helical transmembrane segment spans residues 22-42 (TPTWALATVCFFFIAVSICLE). At 43-68 (RLINLLSTRLKKNRKTSLLEAVEKLK) the chain is on the cytoplasmic side. A helical membrane pass occupies residues 69–89 (SVLMVLGFMSLMLNVTEGEVS). At 90-153 (KICIPIKYAN…SEEGLTQLSY (64 aa)) the chain is on the extracellular side. Residues 154–174 (FFFVLACMHILCNLAILLLGM) traverse the membrane as a helical segment. The Cytoplasmic portion of the chain corresponds to 175–275 (AKMRKWNSWE…IQRSLHEDFK (101 aa)). Residues 276 to 296 (TVVGISPLMWLTVVIFMLLDV) traverse the membrane as a helical segment. Topologically, residues 297–304 (SGWRVYFY) are extracellular. The chain crosses the membrane as a helical span at residues 305 to 325 (MSFVPLIIVLVIGTKLEMIVA). Topologically, residues 326–357 (KMAVTIKENNSVIRGTPLVESNDTHFWFSNPR) are cytoplasmic. Residues 358–378 (FLLSILHYTLFLNTFEMAFIV) traverse the membrane as a helical segment. Residues 379 to 401 (WITWQFGINSCYHDNQGIIITRL) are Extracellular-facing. A helical transmembrane segment spans residues 402–422 (VLAVTVQFLSSYITLPLYAIV). Topologically, residues 423 to 508 (TQMGSSYKRA…EIQIQEKTER (86 aa)) are cytoplasmic. The interval 436 to 457 (EQLANVLRHWQGMVRDKKKTIQ) is calmodulin-binding. A disordered region spans residues 453 to 492 (KKTIQTPDTDNNSNNNNGDIDSGESPVQTEVASEFRFSGR). Residue S494 is modified to Phosphoserine.

The protein belongs to the MLO family.

Its subcellular location is the membrane. Functionally, may be involved in modulation of pathogen defense and leaf cell death. Activity seems to be regulated by Ca(2+)-dependent calmodulin binding and seems not to require heterotrimeric G proteins. This is MLO-like protein 3 (MLO3) from Arabidopsis thaliana (Mouse-ear cress).